The following is a 264-amino-acid chain: Acyl-[acyl-carrier-protein]--UDP-N-acetylglucosamine O-acyltransferase (264 aa).

It belongs to the transferase hexapeptide repeat family. LpxA subfamily. As to quaternary structure, homotrimer.

The protein localises to the cytoplasm. The catalysed reaction is a (3R)-hydroxyacyl-[ACP] + UDP-N-acetyl-alpha-D-glucosamine = a UDP-3-O-[(3R)-3-hydroxyacyl]-N-acetyl-alpha-D-glucosamine + holo-[ACP]. Its pathway is glycolipid biosynthesis; lipid IV(A) biosynthesis; lipid IV(A) from (3R)-3-hydroxytetradecanoyl-[acyl-carrier-protein] and UDP-N-acetyl-alpha-D-glucosamine: step 1/6. In terms of biological role, involved in the biosynthesis of lipid A, a phosphorylated glycolipid that anchors the lipopolysaccharide to the outer membrane of the cell. In Rickettsia peacockii (strain Rustic), this protein is Acyl-[acyl-carrier-protein]--UDP-N-acetylglucosamine O-acyltransferase.